The following is a 613-amino-acid chain: Apoptosis-inducing factor 1, mitochondrial (613 aa).

Short sequence motifs (mitochondrial localization signal) lie at residues 1–31 (MFRC…PRQR) and 63–89 (KIDN…KTMK). The transit peptide at 1–54 (MFRCGGLAAGALKQKLVPLVRTVCVRSPRQRNRLPGNLFQRWHVPLELQMTRQM) directs the protein to the mitochondrion. Positions 55–101 (ASSGASGGKIDNSVLVLIVGLSTVGAGAYAYKTMKEDEKRYNERISG) are cleaved as a propeptide — removed in mature form. Residues 100–127 (SGLGLTPEQKQKKAALSASEGEEVPQDK) form a disordered region. T105 is modified (phosphothreonine). K109 bears the N6-succinyllysine mark. S116 and S118 each carry phosphoserine. The FAD-dependent oxidoreductase stretch occupies residues 134–483 (FLLIGGGTAA…KPYWHQSMFW (350 aa)). Residues 138–142 (GGGTA), 164–165 (ED), R172, and K177 contribute to the FAD site. Residue W196 coordinates NAD(+). FAD is bound at residue V233. K255 is covalently cross-linked (Glycyl lysine isopeptide (Lys-Gly) (interchain with G-Cter in ubiquitin)). S268 bears the Phosphoserine mark. An FAD-binding site is contributed by R285. A Phosphoserine modification is found at S292. NAD(+) is bound by residues 308–311 (GGFL), E336, and K342. S371 is modified (phosphoserine). K388 carries the post-translational modification N6-acetyllysine. G399 contributes to the NAD(+) binding site. D438 contributes to the FAD binding site. The Nuclear localization signal signature appears at 446–451 (KLGRRR). NAD(+) contacts are provided by residues 453 to 454 (EH), W483, and E493. FAD contacts are provided by residues 454–455 (HH) and W483. Residues 513–529 (AQDNPKSATEQSGTGIR) show a composition bias toward polar residues. Residues 513–554 (AQDNPKSATEQSGTGIRSESETESEASEITIPPSTPAVPQAP) form a disordered region. A Phosphothreonine modification is found at T521. A phosphoserine mark is found at S524 and S530. N583 contributes to the NAD(+) binding site. Position 593 is an N6-acetyllysine (K593).

Belongs to the FAD-dependent oxidoreductase family. As to quaternary structure, monomer (oxidized form). Homodimer (reduced form). Upon reduction with NADH, undergoes dimerization and forms tight, long-lived FADH2-NAD charge transfer complexes (CTC) resistant to oxidation. Also dimerizes with isoform 3 preventing its release from mitochondria. Interacts with XIAP/BIRC4. Interacts (via N-terminus) with EIF3G (via C-terminus). Interacts with PRELID1. Interacts with CHCHD4; the interaction increases in presence of NADH. Interacts with processed form of PARP1 (Poly [ADP-ribose] polymerase 1, processed C-terminus); interaction is mediated with poly-ADP-ribose chains attached to PARP1, promoting translocation into the nucleus. FAD is required as a cofactor. In terms of processing, under normal conditions, a 54-residue N-terminal segment is first proteolytically removed during or just after translocation into the mitochondrial intermembrane space (IMS) by the mitochondrial processing peptidase (MPP) to form the inner-membrane-anchored mature form (AIFmit). During apoptosis, it is further proteolytically processed at amino-acid position 101 leading to the generation of the mature form, which is confined to the mitochondrial IMS in a soluble form (AIFsol). AIFsol is released to the cytoplasm in response to specific death signals, and translocated to the nucleus, where it induces nuclear apoptosis in a caspase-independent manner. Post-translationally, ubiquitination by XIAP/BIRC4 does not lead to proteasomal degradation. Ubiquitination at Lys-255 by XIAP/BIRC4 blocks its ability to bind DNA and induce chromatin degradation, thereby inhibiting its ability to induce cell death. Expressed in all tested tissues. Detected in muscle and skin fibroblasts (at protein level). Expressed in osteoblasts (at protein level). In terms of tissue distribution, brain specific. As to expression, expressed in all tested tissues except brain. Isoform 5 is frequently down-regulated in human cancers.

The protein localises to the mitochondrion intermembrane space. It is found in the mitochondrion inner membrane. Its subcellular location is the cytoplasm. The protein resides in the nucleus. It localises to the perinuclear region. The protein localises to the mitochondrion. It is found in the cytosol. The enzyme catalyses A + NADH + H(+) = AH2 + NAD(+). Its function is as follows. Functions both as NADH oxidoreductase and as regulator of apoptosis. In response to apoptotic stimuli, it is released from the mitochondrion intermembrane space into the cytosol and to the nucleus, where it functions as a proapoptotic factor in a caspase-independent pathway. Release into the cytoplasm is mediated upon binding to poly-ADP-ribose chains. The soluble form (AIFsol) found in the nucleus induces 'parthanatos' i.e. caspase-independent fragmentation of chromosomal DNA. Binds to DNA in a sequence-independent manner. Interacts with EIF3G, and thereby inhibits the EIF3 machinery and protein synthesis, and activates caspase-7 to amplify apoptosis. Plays a critical role in caspase-independent, pyknotic cell death in hydrogen peroxide-exposed cells. In contrast, participates in normal mitochondrial metabolism. Plays an important role in the regulation of respiratory chain biogenesis by interacting with CHCHD4 and controlling CHCHD4 mitochondrial import. Functionally, has NADH oxidoreductase activity. Does not induce nuclear apoptosis. In terms of biological role, pro-apoptotic isoform. This Homo sapiens (Human) protein is Apoptosis-inducing factor 1, mitochondrial.